Consider the following 417-residue polypeptide: Transmembrane protease serine 11G (417 aa).

Over 1–21 (MYQPGILVRRKRVWKPWTVAL) the chain is Cytoplasmic. A helical; Signal-anchor for type II membrane protein membrane pass occupies residues 22–42 (ITVALLLALAVLIGLLVYFLV). The Extracellular portion of the chain corresponds to 43-417 (YDEKTHYYQA…RDWIKSKTSI (375 aa)). In terms of domain architecture, SEA spans 46 to 165 (KTHYYQASFW…PYLREMNAAQ (120 aa)). A glycan (N-linked (GlcNAc...) asparagine) is linked at N60. The region spanning 186–416 (IADGKPADKA…YRDWIKSKTS (231 aa)) is the Peptidase S1 domain. A disulfide bridge links C211 with C227. Active-site charge relay system residues include H226 and D271. 2 cysteine pairs are disulfide-bonded: C336–C352 and C363–C392. The active-site Charge relay system is the S367.

The protein belongs to the peptidase S1 family.

It is found in the membrane. The polypeptide is Transmembrane protease serine 11G (Tmprss11g) (Mus musculus (Mouse)).